A 308-amino-acid polypeptide reads, in one-letter code: Transaldolase (308 aa).

The active-site Schiff-base intermediate with substrate is the Lys-125.

The protein belongs to the transaldolase family. Type 1 subfamily. As to quaternary structure, homodimer.

The protein localises to the cytoplasm. It carries out the reaction D-sedoheptulose 7-phosphate + D-glyceraldehyde 3-phosphate = D-erythrose 4-phosphate + beta-D-fructose 6-phosphate. It participates in carbohydrate degradation; pentose phosphate pathway; D-glyceraldehyde 3-phosphate and beta-D-fructose 6-phosphate from D-ribose 5-phosphate and D-xylulose 5-phosphate (non-oxidative stage): step 2/3. Transaldolase is important for the balance of metabolites in the pentose-phosphate pathway. This is Transaldolase from Pseudomonas putida (strain W619).